A 712-amino-acid polypeptide reads, in one-letter code: DNA ligase (712 aa).

The segment covering 1–22 has biased composition (low complexity); that stretch reads MSTQYDSDSSPAASNSGSADPA. The tract at residues 1 to 23 is disordered; that stretch reads MSTQYDSDSSPAASNSGSADPAL. 53 to 57 is an NAD(+) binding site; that stretch reads DAEFD. Residues 69 to 93 form a disordered region; the sequence is SHPEAVTGPSPTTEVAPSPPESSPF. NAD(+)-binding positions include 104–105 and glutamate 129; that span reads SL. Lysine 131 (N6-AMP-lysine intermediate) is an active-site residue. 4 residues coordinate NAD(+): arginine 152, glutamate 192, lysine 308, and lysine 332. Residues cysteine 426, cysteine 429, cysteine 445, and cysteine 451 each coordinate Zn(2+). Residues 624–712 enclose the BRCT domain; sequence IQADLLAGLS…GPGKGDAEED (89 aa).

Belongs to the NAD-dependent DNA ligase family. LigA subfamily. Mg(2+) is required as a cofactor. Requires Mn(2+) as cofactor.

The catalysed reaction is NAD(+) + (deoxyribonucleotide)n-3'-hydroxyl + 5'-phospho-(deoxyribonucleotide)m = (deoxyribonucleotide)n+m + AMP + beta-nicotinamide D-nucleotide.. Its function is as follows. DNA ligase that catalyzes the formation of phosphodiester linkages between 5'-phosphoryl and 3'-hydroxyl groups in double-stranded DNA using NAD as a coenzyme and as the energy source for the reaction. It is essential for DNA replication and repair of damaged DNA. The protein is DNA ligase of Corynebacterium urealyticum (strain ATCC 43042 / DSM 7109).